The sequence spans 137 residues: Putative pre-16S rRNA nuclease (137 aa).

It belongs to the YqgF nuclease family.

The protein resides in the cytoplasm. Functionally, could be a nuclease involved in processing of the 5'-end of pre-16S rRNA. In Anaeromyxobacter dehalogenans (strain 2CP-1 / ATCC BAA-258), this protein is Putative pre-16S rRNA nuclease.